The following is a 264-amino-acid chain: Tropomyosin Cha f 1.0101 (264 aa).

Met-1 is subject to N-acetylmethionine. 2 disordered regions span residues 1–56 (MDAI…VENE) and 92–126 (IQLPEEDLERSEERLNTATTKLAEASQAADESERM). Residues 1–264 (MDAIKKKMQA…RLEDELVNEK (264 aa)) adopt a coiled-coil conformation. Residues 12–45 (KLEKDNAMDRADTLEQQNKEANLRAEKTEEEIRA) show a composition bias toward basic and acidic residues.

It belongs to the tropomyosin family. As to quaternary structure, homodimer. In terms of tissue distribution, expressed in muscle (at protein level). Expressed in claw muscles.

Tropomyosin, in association with the troponin complex, plays a central role in the calcium dependent regulation of muscle contraction. This chain is Tropomyosin Cha f 1.0101, found in Charybdis feriata (Crucifix crab).